Consider the following 318-residue polypeptide: MLIDKFERKIDYIRVSVTSRCNFRCLYCMPNTPFEWEPHENILRYEEMFEFLRLAIDEGINKIRLTGGEPLLRKDLDVFVKMLHDYRPDLDLALTTNGYYLKEYAKKLKDAGLKRVNMSLDSLKPEVAAKIAQKDVLNRVIQGLDEALKVGLKVKLNTVVMQGINDTEILDLLEFAKNKGVTIRFIEFMENERAYPGVKRVDSKVILDKIAKKYKFKELPKDNSASRYFETEDGYVFGIIEPHNEDFCKSCNRIRLTAEGYLIPCLFFTESYNIKEALREGNIQKASEILREVVANKPEKNDWQDEEVSTRAFWETGG.

Positions 5–217 (KFERKIDYIR…DKIAKKYKFK (213 aa)) constitute a Radical SAM core domain. Arginine 14 lines the GTP pocket. 2 residues coordinate [4Fe-4S] cluster: cysteine 21 and cysteine 25. Tyrosine 27 contacts S-adenosyl-L-methionine. Cysteine 28 provides a ligand contact to [4Fe-4S] cluster. GTP is bound at residue arginine 64. Glycine 68 serves as a coordination point for S-adenosyl-L-methionine. A GTP-binding site is contributed by threonine 95. Residue serine 119 coordinates S-adenosyl-L-methionine. Lysine 155 provides a ligand contact to GTP. Residue methionine 189 coordinates S-adenosyl-L-methionine. [4Fe-4S] cluster-binding residues include cysteine 248 and cysteine 251. Residue 253–255 (RIR) coordinates GTP. Position 265 (cysteine 265) interacts with [4Fe-4S] cluster.

The protein belongs to the radical SAM superfamily. MoaA family. Monomer and homodimer. Requires [4Fe-4S] cluster as cofactor.

The enzyme catalyses GTP + AH2 + S-adenosyl-L-methionine = (8S)-3',8-cyclo-7,8-dihydroguanosine 5'-triphosphate + 5'-deoxyadenosine + L-methionine + A + H(+). It participates in cofactor biosynthesis; molybdopterin biosynthesis. Functionally, catalyzes the cyclization of GTP to (8S)-3',8-cyclo-7,8-dihydroguanosine 5'-triphosphate. This chain is GTP 3',8-cyclase, found in Nautilia profundicola (strain ATCC BAA-1463 / DSM 18972 / AmH).